Consider the following 182-residue polypeptide: MSDSKVNMVSPPEGLTGEGFFATKLNDVVGLARANSLWPLPFATSCCGIEFMATMAAHYDLARFGSERVSFSPRQADMLLVMGTISKKMAPILRQVYEQMSEPRWVIAVGACASSGGVFDTYSVLQGIDKVIPVDVYVPGCPPRPEQIVDGVMRLQELVKSESVRRRSSPEYQELLASYNIS.

Positions 46, 47, 112, and 141 each coordinate [4Fe-4S] cluster.

This sequence belongs to the complex I 20 kDa subunit family. In terms of assembly, NDH-1 is composed of 14 different subunits. Subunits NuoB, C, D, E, F, and G constitute the peripheral sector of the complex. Requires [4Fe-4S] cluster as cofactor.

It localises to the cell inner membrane. The catalysed reaction is a quinone + NADH + 5 H(+)(in) = a quinol + NAD(+) + 4 H(+)(out). In terms of biological role, NDH-1 shuttles electrons from NADH, via FMN and iron-sulfur (Fe-S) centers, to quinones in the respiratory chain. The immediate electron acceptor for the enzyme in this species is believed to be a menaquinone. Couples the redox reaction to proton translocation (for every two electrons transferred, four hydrogen ions are translocated across the cytoplasmic membrane), and thus conserves the redox energy in a proton gradient. In Flavobacterium johnsoniae (strain ATCC 17061 / DSM 2064 / JCM 8514 / BCRC 14874 / CCUG 350202 / NBRC 14942 / NCIMB 11054 / UW101) (Cytophaga johnsonae), this protein is NADH-quinone oxidoreductase subunit B.